A 432-amino-acid polypeptide reads, in one-letter code: 3-phosphoshikimate 1-carboxyvinyltransferase (432 aa).

Lys-23, Ser-24, and Arg-28 together coordinate 3-phosphoshikimate. Lys-23 is a phosphoenolpyruvate binding site. 2 residues coordinate phosphoenolpyruvate: Gly-95 and Arg-123. 3-phosphoshikimate contacts are provided by Ser-167, Gln-169, Asp-317, and Lys-344. Gln-169 is a binding site for phosphoenolpyruvate. Asp-317 functions as the Proton acceptor in the catalytic mechanism. Phosphoenolpyruvate is bound by residues Arg-348 and Arg-390.

Belongs to the EPSP synthase family. As to quaternary structure, monomer.

The protein localises to the cytoplasm. The enzyme catalyses 3-phosphoshikimate + phosphoenolpyruvate = 5-O-(1-carboxyvinyl)-3-phosphoshikimate + phosphate. It functions in the pathway metabolic intermediate biosynthesis; chorismate biosynthesis; chorismate from D-erythrose 4-phosphate and phosphoenolpyruvate: step 6/7. Its function is as follows. Catalyzes the transfer of the enolpyruvyl moiety of phosphoenolpyruvate (PEP) to the 5-hydroxyl of shikimate-3-phosphate (S3P) to produce enolpyruvyl shikimate-3-phosphate and inorganic phosphate. In Staphylococcus aureus (strain N315), this protein is 3-phosphoshikimate 1-carboxyvinyltransferase.